The sequence spans 332 residues: Probable class II chitinase ARB_00204 (332 aa).

A signal peptide spans methionine 1–alanine 18. A GH18 domain is found at aspartate 19–phenylalanine 331. Glutamate 118 (proton donor) is an active-site residue. The N-linked (GlcNAc...) asparagine glycan is linked to asparagine 245.

Belongs to the glycosyl hydrolase 18 family. Chitinase class II subfamily.

The protein localises to the secreted. It catalyses the reaction Random endo-hydrolysis of N-acetyl-beta-D-glucosaminide (1-&gt;4)-beta-linkages in chitin and chitodextrins.. Functionally, degrades chitin and chitotriose. This is Probable class II chitinase ARB_00204 from Arthroderma benhamiae (strain ATCC MYA-4681 / CBS 112371) (Trichophyton mentagrophytes).